Reading from the N-terminus, the 119-residue chain is Achromolysin (119 aa).

The protein belongs to the peptidase M4 family. The cofactor is Ca(2+). Zn(2+) is required as a cofactor.

Its subcellular location is the secreted. Has staphylolytic activity. This Achromobacter lyticus protein is Achromolysin.